A 179-amino-acid polypeptide reads, in one-letter code: Large ribosomal subunit protein uL5 (179 aa).

This sequence belongs to the universal ribosomal protein uL5 family. As to quaternary structure, part of the 50S ribosomal subunit; part of the 5S rRNA/L5/L18/L25 subcomplex. Contacts the 5S rRNA and the P site tRNA. Forms a bridge to the 30S subunit in the 70S ribosome.

Its function is as follows. This is one of the proteins that bind and probably mediate the attachment of the 5S RNA into the large ribosomal subunit, where it forms part of the central protuberance. In the 70S ribosome it contacts protein S13 of the 30S subunit (bridge B1b), connecting the 2 subunits; this bridge is implicated in subunit movement. Contacts the P site tRNA; the 5S rRNA and some of its associated proteins might help stabilize positioning of ribosome-bound tRNAs. The protein is Large ribosomal subunit protein uL5 of Bacillus cereus (strain Q1).